Consider the following 337-residue polypeptide: MRVLGIETSCDETGIAIFDDQKGILSHQLYSQVKLHADYGGVVPELASRDHVRKTIPLIQAALQEAGLDKDGIDGIAYTAGPGLVGAILVGATIGRSLAMAWNKPAIAVHHMEGHLLAPMLEERAPEFPFVALLVSGGHSMLVRVDGIGSYQLLGESIDDAAGEAFDKTAKLMGLDYPGGPLLSRLAEKGTTGRFHFPRPMTDRPGLDMSFSGLKTFAANTIAANGDDEQTRADIARAFEDAVVDTLAIKCRRALKETGLKRLVVAGGVSANRHLRAQLAELMESLKGKVFYPRTEYCTDNGAMIAYAGMQRLKAGVFEPLAVKAVPRWPLDTLDPV.

Positions 111 and 115 each coordinate Fe cation. Substrate-binding positions include 134-138, D167, G180, and N272; that span reads LVSGG. Residue D300 coordinates Fe cation.

It belongs to the KAE1 / TsaD family. Fe(2+) serves as cofactor.

It is found in the cytoplasm. The enzyme catalyses L-threonylcarbamoyladenylate + adenosine(37) in tRNA = N(6)-L-threonylcarbamoyladenosine(37) in tRNA + AMP + H(+). Its function is as follows. Required for the formation of a threonylcarbamoyl group on adenosine at position 37 (t(6)A37) in tRNAs that read codons beginning with adenine. Is involved in the transfer of the threonylcarbamoyl moiety of threonylcarbamoyl-AMP (TC-AMP) to the N6 group of A37, together with TsaE and TsaB. TsaD likely plays a direct catalytic role in this reaction. In Aeromonas salmonicida (strain A449), this protein is tRNA N6-adenosine threonylcarbamoyltransferase.